The following is an 84-amino-acid chain: Toxin To10 (84 aa).

A signal peptide spans 1-19 (MNYSTLIAVASLLTAGTES). The region spanning 21–80 (KDGYPVEGSCAFPCGYDNAYCDKLCKERKADSGYCYWVNILCYCYGLPDNAAIKGYGRCK) is the LCN-type CS-alpha/beta domain. 4 disulfide bridges follow: C30–C79, C34–C55, C41–C62, and C45–C64. P81 is subject to Proline amide.

Belongs to the long (4 C-C) scorpion toxin superfamily. Sodium channel inhibitor family. Alpha subfamily. Expressed by the venom gland.

The protein localises to the secreted. Functionally, alpha toxins bind voltage-independently at site-3 of sodium channels (Nav) and inhibit the inactivation of the activated channels, thereby blocking neuronal transmission. This chain is Toxin To10, found in Tityus obscurus (Amazonian scorpion).